The following is a 406-amino-acid chain: Cysteine desulfurase (406 aa).

Lysine 226 is subject to N6-(pyridoxal phosphate)lysine. The active-site Cysteine persulfide intermediate is cysteine 364.

This sequence belongs to the class-V pyridoxal-phosphate-dependent aminotransferase family. Csd subfamily. As to quaternary structure, homodimer. Interacts with SufE and the SufBCD complex composed of SufB, SufC and SufD. The interaction with SufE is required to mediate the direct transfer of the sulfur atom from the S-sulfanylcysteine. Pyridoxal 5'-phosphate is required as a cofactor.

It localises to the cytoplasm. It carries out the reaction (sulfur carrier)-H + L-cysteine = (sulfur carrier)-SH + L-alanine. The enzyme catalyses L-selenocysteine + AH2 = hydrogenselenide + L-alanine + A + H(+). Its pathway is cofactor biosynthesis; iron-sulfur cluster biosynthesis. Cysteine desulfurases mobilize the sulfur from L-cysteine to yield L-alanine, an essential step in sulfur metabolism for biosynthesis of a variety of sulfur-containing biomolecules. Component of the suf operon, which is activated and required under specific conditions such as oxidative stress and iron limitation. Acts as a potent selenocysteine lyase in vitro, that mobilizes selenium from L-selenocysteine. Selenocysteine lyase activity is however unsure in vivo. This is Cysteine desulfurase from Klebsiella pneumoniae (strain 342).